We begin with the raw amino-acid sequence, 417 residues long: Serine hydroxymethyltransferase (417 aa).

Residues leucine 122 and 126–128 (GHL) each bind (6S)-5,6,7,8-tetrahydrofolate. Residue lysine 230 is modified to N6-(pyridoxal phosphate)lysine. 355-357 (SPF) is a (6S)-5,6,7,8-tetrahydrofolate binding site.

The protein belongs to the SHMT family. In terms of assembly, homodimer. The cofactor is pyridoxal 5'-phosphate.

It is found in the cytoplasm. The catalysed reaction is (6R)-5,10-methylene-5,6,7,8-tetrahydrofolate + glycine + H2O = (6S)-5,6,7,8-tetrahydrofolate + L-serine. It participates in one-carbon metabolism; tetrahydrofolate interconversion. Its pathway is amino-acid biosynthesis; glycine biosynthesis; glycine from L-serine: step 1/1. Functionally, catalyzes the reversible interconversion of serine and glycine with tetrahydrofolate (THF) serving as the one-carbon carrier. This reaction serves as the major source of one-carbon groups required for the biosynthesis of purines, thymidylate, methionine, and other important biomolecules. Also exhibits THF-independent aldolase activity toward beta-hydroxyamino acids, producing glycine and aldehydes, via a retro-aldol mechanism. The sequence is that of Serine hydroxymethyltransferase from Francisella tularensis subsp. novicida (strain U112).